Here is a 364-residue protein sequence, read N- to C-terminus: Chorismate synthase (364 aa).

Position 48 (Arg-48) interacts with NADP(+). Residues 131-133 (RSS), 243-244 (NA), Gly-288, 303-307 (KPTSS), and Arg-329 contribute to the FMN site.

It belongs to the chorismate synthase family. In terms of assembly, homotetramer. FMNH2 serves as cofactor.

It carries out the reaction 5-O-(1-carboxyvinyl)-3-phosphoshikimate = chorismate + phosphate. Its pathway is metabolic intermediate biosynthesis; chorismate biosynthesis; chorismate from D-erythrose 4-phosphate and phosphoenolpyruvate: step 7/7. Its function is as follows. Catalyzes the anti-1,4-elimination of the C-3 phosphate and the C-6 proR hydrogen from 5-enolpyruvylshikimate-3-phosphate (EPSP) to yield chorismate, which is the branch point compound that serves as the starting substrate for the three terminal pathways of aromatic amino acid biosynthesis. This reaction introduces a second double bond into the aromatic ring system. The protein is Chorismate synthase of Brucella anthropi (strain ATCC 49188 / DSM 6882 / CCUG 24695 / JCM 21032 / LMG 3331 / NBRC 15819 / NCTC 12168 / Alc 37) (Ochrobactrum anthropi).